A 186-amino-acid polypeptide reads, in one-letter code: NADH dehydrogenase [ubiquinone] 1 beta subcomplex subunit 8, mitochondrial (186 aa).

A mitochondrion-targeting transit peptide spans 1–28; sequence MAAARAGVLGVRWLQKAARNVVPLGART. A helical membrane pass occupies residues 133-153; the sequence is LFGFVAFMLFMFWVGETYPAY.

This sequence belongs to the complex I NDUFB8 subunit family. In terms of assembly, complex I is composed of 45 different subunits.

The protein localises to the mitochondrion inner membrane. Its function is as follows. Accessory subunit of the mitochondrial membrane respiratory chain NADH dehydrogenase (Complex I), that is believed not to be involved in catalysis. Complex I functions in the transfer of electrons from NADH to the respiratory chain. The immediate electron acceptor for the enzyme is believed to be ubiquinone. The chain is NADH dehydrogenase [ubiquinone] 1 beta subcomplex subunit 8, mitochondrial (NDUFB8) from Bos taurus (Bovine).